Consider the following 1343-residue polypeptide: MVYSYSEKKRIRKDFGKRQKVLDIPYLLSIQLDSFKKFTDQDPTGERGFEAAFRSVFPIKSFSGNSELQYVSYKLGEPVFDVKECQIRGITYSAPLRVKLRMVLYDREAAPGTVKDIKEQEVYMGDIPLMTDNGTFVINGTERVIVSQLHRSPGVFFDHDRGKTHSSGKVLYNARIIPYRGSWLDFEFDPKDALFVRIDRRRKLAASIILRALDYSTQDILDLFFDRVNFKIKQDSLVMDLVADRLRGETASYDIKDAEGTVLVEKGRRITARHIRQLEKTNTTELEVPVEYIAGKISGQDYIDPDTGEVLVSANAEIGLEDLAKLSLAGIKEVSTLYINELDNGAYISDTLRIDSTTNRLEALVEIYRMMRPGEPPTKDAAEALFNNLFFSEERYDLSKVGRMKFNRRLSIDDDEGTGILSKEDIVAVMKNIIAIRNGLDEVDDIDHLGNRRIRSVGEMAENQFRVGLVRVERAVRERLSLGDLNELMPQDLINAKPISAAVKEFFGSSQLSQFMDQNNPLSEVTHKRRISALGPGGLTRERAGFEVRDVHPTHYGRLCPIETPEGPNIGLINSLSTFARTNNYGFLETPYRKVIDGVVTDEVDYLSAIEEGRYVIAQAIVELDENNRMMDELIACRHKGDSTFMGAADIQYMDVSPQQIISVAASLIPFLEHDDANRALMGANMQRQAVPTLKADKPLVGTGIERTLAVDSGVVVAAKRGGYVDYVDASRIVVKVDEAELTPGEAGIDIYNLTKYTRSNQNTCINQRPCCSVGDPVVRGDVLADGPSTDLGDLALGQNMRIAFMPWNGYNFEDSILISERVAQEDRFTTIHIQELSCIARDTKLGSEEITADIPNVGESALSKLDESGIVYIGAEVKGGDILVGKVTPKGETQLTPEEKLLRAIFGEKASDVKDSSLRVPNSVKGTIIDVQVFTRDGVDKDKRAVEIEEMHIAQAKKDLTEEFQILEDGVLGRARNLLLGAGFDEAQLDAIPRSQLLMQTIDDEAKQTELEQLAEQAEELKADFDKKFEVKRRKITQGDDLAPGVLKIVKVYLAVKRTIQPGDKMAGRHGNKGVISKICPVEDMPYDEKGNPVDIVLNPLGVPSRMNIGQVLEVHMGAAAKGIGNRITEMLEEQRELAELRGYIKEVYELGDEVQQRVDIDSFTDDEVLRLAKNLKGGVPTATPAFDGAKEKEIKQMLALAGLPTSGQLTLCDGRTGNEFERQVTVGYMYMLKLNHLVDDKMHARSTGSYSLVTQQPLGGKAQFGGQRFGEMEVWALEAYGAAYTLQEMLTVKSDDVNGRTQMYKNIVDGNHQMQPGMPESFNVLLKEIRSLGINIELDQK.

Belongs to the RNA polymerase beta chain family. In terms of assembly, the RNAP catalytic core consists of 2 alpha, 1 beta, 1 beta' and 1 omega subunit. When a sigma factor is associated with the core the holoenzyme is formed, which can initiate transcription.

The enzyme catalyses RNA(n) + a ribonucleoside 5'-triphosphate = RNA(n+1) + diphosphate. Its function is as follows. DNA-dependent RNA polymerase catalyzes the transcription of DNA into RNA using the four ribonucleoside triphosphates as substrates. In Shewanella piezotolerans (strain WP3 / JCM 13877), this protein is DNA-directed RNA polymerase subunit beta.